Here is a 1558-residue protein sequence, read N- to C-terminus: Hybrid PKS-NRPS synthetase TAS1 (1558 aa).

The condensation (C) domain stretch occupies residues 27–392 (YPMTKAQESL…RGLETPRAQV (366 aa)). The segment at 522-919 (TYKELNERSN…TITDVMPEVT (398 aa)) is adenylation (A) domain. The tract at residues 995–1028 (TSGSSSSATPSLVSSGSTTCRSPSTSSCSDSRSA) is disordered. A Carrier domain is found at 1027–1104 (SASPAITSAV…GQVDLLCGSE (78 aa)). Serine 1063 carries the O-(pantetheine 4'-phosphoryl)serine modification. The segment at 1116 to 1144 (LGRGRTKSPAKIVDSQGRSSPSTIPSGGR) is disordered. The segment covering 1131-1140 (QGRSSPSTIP) has biased composition (polar residues). Residues 1145–1558 (KSEIAIVGIS…GVNAHCVLRS (414 aa)) enclose the Ketosynthase family 3 (KS3) domain. Residues cysteine 1308, histidine 1444, and asparagine 1484 each act as for beta-ketoacyl synthase activity in the active site.

In the N-terminal section; belongs to the NRP synthetase family. Pantetheine 4'-phosphate serves as cofactor.

The catalysed reaction is acetoacetyl-CoA + L-isoleucine + ATP = tenuazonic acid + AMP + diphosphate + CoA + 2 H(+). Functionally, hybrid PKS-NRPS synthetase that mediates the biosynthesis of the toxin tenuazonic acid (TeA), an inhibitor of protein biosynthesis on ribosomes by suppressing the release of new protein. TAS1 alone is sufficient for TeA synthesis via the condensation of isoleucine (Ile) with acetoacetyl-CoA by the N-terminal NRPS module and subsequent cyclization conducted by the C-terminal KS domain. The polypeptide is Hybrid PKS-NRPS synthetase TAS1 (Gloeophyllum trabeum (strain ATCC 11539 / FP-39264 / Madison 617) (Brown rot fungus)).